The sequence spans 121 residues: Large ribosomal subunit protein uL22 (121 aa).

The protein belongs to the universal ribosomal protein uL22 family. In terms of assembly, part of the 50S ribosomal subunit.

Its function is as follows. This protein binds specifically to 23S rRNA; its binding is stimulated by other ribosomal proteins, e.g. L4, L17, and L20. It is important during the early stages of 50S assembly. It makes multiple contacts with different domains of the 23S rRNA in the assembled 50S subunit and ribosome. The globular domain of the protein is located near the polypeptide exit tunnel on the outside of the subunit, while an extended beta-hairpin is found that lines the wall of the exit tunnel in the center of the 70S ribosome. The polypeptide is Large ribosomal subunit protein uL22 (Pseudarthrobacter chlorophenolicus (strain ATCC 700700 / DSM 12829 / CIP 107037 / JCM 12360 / KCTC 9906 / NCIMB 13794 / A6) (Arthrobacter chlorophenolicus)).